The following is a 92-amino-acid chain: Alpha-conotoxin FrXXA (92 aa).

A signal peptide spans 1 to 24; that stretch reads MPKLEMMLLVLLILPLSYFDSAGG. Positions 25–45 are excised as a propeptide; the sequence is QAVKVDGHGDGMDRYLQRDDR. Disulfide bonds link Cys-63–Cys-72, Cys-68–Cys-80, Cys-73–Cys-90, and Cys-78–Cys-92.

It belongs to the conotoxin D superfamily. Homodimer; disulfide-linked. Post-translationally, the homodimer contains 10 disulfide bonds. Expressed by the venom duct.

It is found in the secreted. In terms of biological role, alpha-conotoxins act on postsynaptic membranes, they bind to the nicotinic acetylcholine receptors (nAChR) and thus inhibit them. Through its two C-terminal domains, this homodimeric protein would bind to two nAChR allosteric sites, located outside the nAChR C-loop of the principal binding face and at the adjacent binding interface in a clockwise direction. This toxin blocks both neuronal and muscular subtypes: human alpha-7/CHRNA7, human alpha-3-beta-2 (CHRNA3-CHRNB2), human alpha-4-beta-2 (CHRNA4-CHRNB2), mouse adult muscular subtype alpha-1-beta-1-delta-epsilon (CHRNA1-CHRNB1-CHRND-CHRNE), and mouse fetal muscular subtype alpha-1-beta-1-gamma-delta (CHRNA1-CHRNB1-CHRNG-CHRND). Shows different dissociation rates towards the different subtypes, with a very slow rate towards alpha-7 subtype (almost irreversible), followed by the adult muscular subtype, the fetal muscular subtype, alpha-3-beta-2 and alpha-4-beta-2 (almost entirely reversible within a few minutes of washing). The chain is Alpha-conotoxin FrXXA from Conus fergusoni (Ferguson's cone).